The primary structure comprises 573 residues: Urease subunit alpha 2 (573 aa).

The region spanning 136–573 is the Urease domain; that stretch reads GAIDAHVHLI…LPMAQRYFLF (438 aa). The Ni(2+) site is built by His-141, His-143, and Lys-224. The residue at position 224 (Lys-224) is an N6-carboxylysine. Substrate is bound at residue His-226. Ni(2+)-binding residues include His-253 and His-279. His-327 acts as the Proton donor in catalysis. Asp-367 contributes to the Ni(2+) binding site.

This sequence belongs to the metallo-dependent hydrolases superfamily. Urease alpha subunit family. In terms of assembly, may form a heterohexamer of 3 UreC (alpha) and 3 UreAB (gamma/beta) subunits. May also form a heterotrimer of UreA (gamma), UreB (beta) and UreC (alpha) subunits. Three heterotrimers associate to form the active enzyme. Requires Ni cation as cofactor. Post-translationally, carboxylation allows a single lysine to coordinate two nickel ions.

It localises to the cytoplasm. It carries out the reaction urea + 2 H2O + H(+) = hydrogencarbonate + 2 NH4(+). Its pathway is nitrogen metabolism; urea degradation; CO(2) and NH(3) from urea (urease route): step 1/1. The sequence is that of Urease subunit alpha 2 from Streptomyces avermitilis (strain ATCC 31267 / DSM 46492 / JCM 5070 / NBRC 14893 / NCIMB 12804 / NRRL 8165 / MA-4680).